Reading from the N-terminus, the 433-residue chain is Protein CLP1 homolog (433 aa).

ATP contacts are provided by residues glutamate 22, arginine 61, and 128-133; that span reads DVGKTT.

Belongs to the Clp1 family. Clp1 subfamily.

Its subcellular location is the nucleus. Required for endonucleolytic cleavage during polyadenylation-dependent pre-mRNA 3'-end formation. The sequence is that of Protein CLP1 homolog from Brugia malayi (Filarial nematode worm).